We begin with the raw amino-acid sequence, 83 residues long: Cytochrome b559 subunit alpha (83 aa).

A helical transmembrane segment spans residues 21 to 35 (VIHSITIPSLFIAGW). His-23 is a binding site for heme.

Belongs to the PsbE/PsbF family. Heterodimer of an alpha subunit and a beta subunit. PSII is composed of 1 copy each of membrane proteins PsbA, PsbB, PsbC, PsbD, PsbE, PsbF, PsbH, PsbI, PsbJ, PsbK, PsbL, PsbM, PsbT, PsbX, PsbY, PsbZ, Psb30/Ycf12, at least 3 peripheral proteins of the oxygen-evolving complex and a large number of cofactors. It forms dimeric complexes. Heme b serves as cofactor.

It is found in the plastid. The protein resides in the chloroplast thylakoid membrane. This b-type cytochrome is tightly associated with the reaction center of photosystem II (PSII). PSII is a light-driven water:plastoquinone oxidoreductase that uses light energy to abstract electrons from H(2)O, generating O(2) and a proton gradient subsequently used for ATP formation. It consists of a core antenna complex that captures photons, and an electron transfer chain that converts photonic excitation into a charge separation. In Piper cenocladum (Ant piper), this protein is Cytochrome b559 subunit alpha.